We begin with the raw amino-acid sequence, 582 residues long: MALFTVSRIQTTPFDGQKPGTSGLRKKVKVFVQPHYLENFVQASFNALTEGKVRGATLVVSGDGRYYSEQAIQIITKMAAANGVRRIWIGQNGLLSTPAVSAVIRERVGVDGSKATGSFILTASHNPGGPNEDFGIKYNMENGGPAPEGITNKIYENTTTIKEYLIAPDLPNVDITTVGVTNFTGPEGPFDIEVFDSASDYIKLMKSIFDFESIRKLLTSPKFSFCYDALHGVAGAYAKRIFVDELGAQENSLINCVPKEDFGGGHPDPNLTYAKELVARMGLGKSEPEGEVPEFGAAADGDADRNMVLGKRFFVTPSDSVAIIAANAVEAIPYFSAGLKGVARSMPTSAALDVVAKHLNLKFFEVPTGWKFFGNLMDAGLCSVCGEESFGTGSDHIREKDGIWAVLAWLSILAYKTKDNLESKLVSVEDIVRQHWATYGRHYYTRYDYENVDAGAAKELMAHLVKLQSSLPEVNEIIKGASSDVSKVVHGDEFEYNDPVDGSISSHQGIRYLFEDGSRLIFRLSGTGSEGATIRLYIEQYEKDPSKIGRLSHEALAPLVEAALKLSKMEEFTGRSAPTVIT.

Residues arginine 25 and serine 124 each contribute to the alpha-D-glucose 1,6-bisphosphate site. Serine 124 serves as the catalytic Phosphoserine intermediate. Mg(2+) is bound by residues serine 124, aspartate 300, aspartate 302, and aspartate 304. Residue serine 124 is modified to Phosphoserine. Residues aspartate 304, arginine 305, threonine 368, glutamate 387, serine 389, and lysine 400 each coordinate alpha-D-glucose 1,6-bisphosphate.

The protein belongs to the phosphohexose mutase family. As to quaternary structure, monomer. Mg(2+) is required as a cofactor.

The protein resides in the cytoplasm. The enzyme catalyses alpha-D-glucose 1-phosphate = alpha-D-glucose 6-phosphate. It catalyses the reaction O-phospho-L-seryl-[protein] + alpha-D-glucose 1-phosphate = alpha-D-glucose 1,6-bisphosphate + L-seryl-[protein]. It carries out the reaction alpha-D-glucose 1,6-bisphosphate + L-seryl-[protein] = O-phospho-L-seryl-[protein] + alpha-D-glucose 6-phosphate. Functionally, catalyzes the reversible isomerization of alpha-D-glucose 1-phosphate to alpha-D-glucose 6-phosphate. The mechanism proceeds via the intermediate compound alpha-D-glucose 1,6-bisphosphate. This enzyme participates in both the breakdown and synthesis of glucose. This chain is Phosphoglucomutase, cytoplasmic (PGM1), found in Pisum sativum (Garden pea).